A 115-amino-acid chain; its full sequence is Ribosomal protein uS4-like (115 aa).

This sequence belongs to the universal ribosomal protein uS4 family.

The protein is Ribosomal protein uS4-like of Azoarcus sp. (strain BH72).